The primary structure comprises 169 residues: MSQDFVEIAKIGATYKLNGELNLYPLANSIETLLSYGDWYIQLPATNVWQQLKGESVLKRADKVYIKLANINNADTAKKYVNALIGVPKRALPQLAEDEVYFKDLIGCSVKNINNDSFGVVVDIIETGANEVLVCKEDNSEYLIPYVKQYIVSEDLNSKKIVVDWEYDY.

Positions 97–169 (EDEVYFKDLI…KIVVDWEYDY (73 aa)) constitute a PRC barrel domain.

The protein belongs to the RimM family. Binds ribosomal protein uS19.

It is found in the cytoplasm. In terms of biological role, an accessory protein needed during the final step in the assembly of 30S ribosomal subunit, possibly for assembly of the head region. Essential for efficient processing of 16S rRNA. May be needed both before and after RbfA during the maturation of 16S rRNA. It has affinity for free ribosomal 30S subunits but not for 70S ribosomes. The protein is Ribosome maturation factor RimM of Francisella tularensis subsp. holarctica (strain FTNF002-00 / FTA).